Consider the following 95-residue polypeptide: MLHTLHRSPWLTDFAALLRLLSEGDELLLLQDGVTAAVDGNRYLESLRNAPIKVYALNEDLIARGLTGRISNDIIPIDYTDFVRLTVKHSSQMAW.

It belongs to the DsrH/TusB family. In terms of assembly, heterohexamer, formed by a dimer of trimers. The hexameric TusBCD complex contains 2 copies each of TusB, TusC and TusD. The TusBCD complex interacts with TusE.

It localises to the cytoplasm. Functionally, part of a sulfur-relay system required for 2-thiolation of 5-methylaminomethyl-2-thiouridine (mnm(5)s(2)U) at tRNA wobble positions. The polypeptide is Protein TusB (Escherichia coli O45:K1 (strain S88 / ExPEC)).